Reading from the N-terminus, the 173-residue chain is Regulatory protein RecX (173 aa).

The protein belongs to the RecX family.

The protein resides in the cytoplasm. Functionally, modulates RecA activity. This Mycobacterium marinum (strain ATCC BAA-535 / M) protein is Regulatory protein RecX.